Reading from the N-terminus, the 392-residue chain is tRNA-specific 2-thiouridylase MnmA (392 aa).

ATP-binding positions include 18 to 25 and L44; that span reads AMSGGVDS. C112 (nucleophile) is an active-site residue. C112 and C208 are disulfide-bonded. ATP is bound at residue G136. An interaction with tRNA region spans residues 158 to 160; that stretch reads RDQ. C208 serves as the catalytic Cysteine persulfide intermediate.

It belongs to the MnmA/TRMU family.

It is found in the cytoplasm. It catalyses the reaction S-sulfanyl-L-cysteinyl-[protein] + uridine(34) in tRNA + AH2 + ATP = 2-thiouridine(34) in tRNA + L-cysteinyl-[protein] + A + AMP + diphosphate + H(+). Catalyzes the 2-thiolation of uridine at the wobble position (U34) of tRNA, leading to the formation of s(2)U34. In Rhodospirillum centenum (strain ATCC 51521 / SW), this protein is tRNA-specific 2-thiouridylase MnmA.